The following is a 295-amino-acid chain: Diaminopimelate epimerase (295 aa).

Substrate-binding residues include Asn11 and Asn78. Cys87 functions as the Proton donor in the catalytic mechanism. Residues 88 to 89 (GN), Asn163, Asn199, and 220 to 221 (ER) each bind substrate. Cys229 serves as the catalytic Proton acceptor. 230–231 (GT) provides a ligand contact to substrate.

The protein belongs to the diaminopimelate epimerase family. Homodimer.

The protein resides in the cytoplasm. The catalysed reaction is (2S,6S)-2,6-diaminopimelate = meso-2,6-diaminopimelate. It functions in the pathway amino-acid biosynthesis; L-lysine biosynthesis via DAP pathway; DL-2,6-diaminopimelate from LL-2,6-diaminopimelate: step 1/1. Functionally, catalyzes the stereoinversion of LL-2,6-diaminopimelate (L,L-DAP) to meso-diaminopimelate (meso-DAP), a precursor of L-lysine and an essential component of the bacterial peptidoglycan. The protein is Diaminopimelate epimerase of Mycobacteroides abscessus (strain ATCC 19977 / DSM 44196 / CCUG 20993 / CIP 104536 / JCM 13569 / NCTC 13031 / TMC 1543 / L948) (Mycobacterium abscessus).